Here is a 160-residue protein sequence, read N- to C-terminus: Ribosomal RNA large subunit methyltransferase H (160 aa).

S-adenosyl-L-methionine is bound by residues Leu-76, Gly-108, and 127–132; that span reads LGKMTW.

It belongs to the RNA methyltransferase RlmH family. As to quaternary structure, homodimer.

It is found in the cytoplasm. The catalysed reaction is pseudouridine(1915) in 23S rRNA + S-adenosyl-L-methionine = N(3)-methylpseudouridine(1915) in 23S rRNA + S-adenosyl-L-homocysteine + H(+). In terms of biological role, specifically methylates the pseudouridine at position 1915 (m3Psi1915) in 23S rRNA. The polypeptide is Ribosomal RNA large subunit methyltransferase H (Rhizobium leguminosarum bv. trifolii (strain WSM2304)).